The sequence spans 360 residues: MKWKKSLAGLSSYKPGKREEEVMAELGLTKITKLSSNENPLGTSKKVAAIQANSSVETEIYPDGWASSLRKEVADFYQLEEEELIFTAGVDELIELLTRVLLDTTTNTVMATPTFVQYRQNALIEGAEVREIPLLQDGEHDLEGMLNAIDEKTTIVWICNPNNPTGNYIELADIQAFLDRVPSDVLVVLDEAYIEYVTPQPEKHEKLVRTYKNLIITRTFSKIYGLASARVGYGIADKEIIRQLNIVRPPFNTTSIGQKLAIEAIKDQAFIGECRTSNANGIKQYEAFAKRFEKVKLYPANGNFVLIDLGIEAGTIFSYLEKNGYITRSGAALGFPTAVRITIGKEEDNSAVIALLEKLL.

An N6-(pyridoxal phosphate)lysine modification is found at Lys-222.

It belongs to the class-II pyridoxal-phosphate-dependent aminotransferase family. Histidinol-phosphate aminotransferase subfamily. As to quaternary structure, homodimer. Requires pyridoxal 5'-phosphate as cofactor.

It carries out the reaction L-histidinol phosphate + 2-oxoglutarate = 3-(imidazol-4-yl)-2-oxopropyl phosphate + L-glutamate. It participates in amino-acid biosynthesis; L-histidine biosynthesis; L-histidine from 5-phospho-alpha-D-ribose 1-diphosphate: step 7/9. This chain is Histidinol-phosphate aminotransferase, found in Listeria innocua serovar 6a (strain ATCC BAA-680 / CLIP 11262).